Here is a 313-residue protein sequence, read N- to C-terminus: Non-structural protein 3 (313 aa).

The interval 1 to 149 (MLKMESTQQM…TRLMKEKIER (149 aa)) is RNA-binding. The interval 150-206 (GEVEVDDAFVEEKMEVDTIDWKSRYEQLEKRFESLKQRVNEKYNNWVIKARKDNENM) is dimerization. A coiled-coil region spans residues 166-237 (DTIDWKSRYE…NKLERDLQSK (72 aa)). The interval 170–234 (WKSRYEQLEK…IYNNKLERDL (65 aa)) is interaction with host ZC3H7B. Positions 208–313 (SLQNVISQQQ…QQSNYIYTYE (106 aa)) are interaction with host EIF4G1.

This sequence belongs to the rotavirus NSP3 family. Homodimer. Interacts (via the coiled-coil region) with host ZC3H7B (via LD motif). Interacts with host EIF4G1.

It localises to the host cytoplasm. Its function is as follows. Plays an important role in stimulating the translation of viral mRNAs. These mRNAs are capped but not polyadenylated, instead terminating in a conserved sequence 'GACC' at the 3' that is recognized by NSP3, which competes with host PABPC1 for EIF4G1 binding. The interaction between NSP3 and host EIF4G1 stabilizes the EIF4E-EIF4G1 interaction, thereby facilitating the initiation of capped mRNA translation. The sequence is that of Non-structural protein 3 from Rotavirus A (strain RVA/Human/Indonesia/69M/1980/G8P4[10]) (RV-A).